A 930-amino-acid chain; its full sequence is Isoleucine--tRNA ligase (930 aa).

Positions 57–67 match the 'HIGH' region motif; sequence PYANGNIHVGH. Glu-554 lines the L-isoleucyl-5'-AMP pocket. The 'KMSKS' region signature appears at 595 to 599; that stretch reads KMSKS. Position 598 (Lys-598) interacts with ATP. Zn(2+) contacts are provided by Cys-888, Cys-891, Cys-908, and Cys-911.

It belongs to the class-I aminoacyl-tRNA synthetase family. IleS type 1 subfamily. As to quaternary structure, monomer. The cofactor is Zn(2+).

It localises to the cytoplasm. It catalyses the reaction tRNA(Ile) + L-isoleucine + ATP = L-isoleucyl-tRNA(Ile) + AMP + diphosphate. Functionally, catalyzes the attachment of isoleucine to tRNA(Ile). As IleRS can inadvertently accommodate and process structurally similar amino acids such as valine, to avoid such errors it has two additional distinct tRNA(Ile)-dependent editing activities. One activity is designated as 'pretransfer' editing and involves the hydrolysis of activated Val-AMP. The other activity is designated 'posttransfer' editing and involves deacylation of mischarged Val-tRNA(Ile). In Streptococcus sanguinis (strain SK36), this protein is Isoleucine--tRNA ligase.